Reading from the N-terminus, the 228-residue chain is Ribonuclease 3 (228 aa).

Positions 3–132 (IRPLEEHLGI…FLGALYLDQG (130 aa)) constitute an RNase III domain. Position 45 (Glu-45) interacts with Mg(2+). Asp-49 is an active-site residue. The Mg(2+) site is built by Asp-118 and Glu-121. The active site involves Glu-121. The DRBM domain maps to 158–227 (DYKSQLQEFV…AKNALDSINN (70 aa)). The disordered stretch occupies residues 205–228 (GTGRTKKEAEQRAAKNALDSINNS).

Belongs to the ribonuclease III family. Homodimer. The cofactor is Mg(2+).

It is found in the cytoplasm. The enzyme catalyses Endonucleolytic cleavage to 5'-phosphomonoester.. In terms of biological role, digests double-stranded RNA. Involved in the processing of primary rRNA transcript to yield the immediate precursors to the large and small rRNAs (23S and 16S). Processes some mRNAs, and tRNAs when they are encoded in the rRNA operon. Processes pre-crRNA and tracrRNA of type II CRISPR loci if present in the organism. The protein is Ribonuclease 3 of Oceanobacillus iheyensis (strain DSM 14371 / CIP 107618 / JCM 11309 / KCTC 3954 / HTE831).